A 371-amino-acid chain; its full sequence is Cytochrome b (371 aa).

The next 4 helical transmembrane spans lie at 25 to 45, 69 to 90, 105 to 125, and 170 to 190; these read FGSM…FLAV, WMMQ…YIHI, WMSG…GYVL, and FFAL…LHII. Residues His-75 and His-89 each coordinate heme b. Residues His-174 and His-188 each coordinate heme b. Residue His-193 coordinates a ubiquinone. Helical transmembrane passes span 218–238, 280–300, 312–332, and 339–358; these read HKDL…VSFS, LGGA…PFTH, LSQL…WAAT, and FIII…LSIP.

Belongs to the cytochrome b family. In terms of assembly, the cytochrome bc1 complex contains 3 respiratory subunits (MT-CYB, CYC1 and UQCRFS1), 2 core proteins (UQCRC1 and UQCRC2) and probably 6 low-molecular weight proteins. Requires heme b as cofactor.

It localises to the mitochondrion inner membrane. Its function is as follows. Component of the ubiquinol-cytochrome c reductase complex (complex III or cytochrome b-c1 complex) that is part of the mitochondrial respiratory chain. The b-c1 complex mediates electron transfer from ubiquinol to cytochrome c. Contributes to the generation of a proton gradient across the mitochondrial membrane that is then used for ATP synthesis. This is Cytochrome b (MT-CYB) from Antaresia childreni (Children's python).